The chain runs to 420 residues: Methanogen homoaconitase large subunit (420 aa).

C302, C362, and C365 together coordinate [4Fe-4S] cluster.

Belongs to the aconitase/IPM isomerase family. LeuC type 2 subfamily. In terms of assembly, heterotetramer of 2 HacA and 2 HacB proteins. [4Fe-4S] cluster serves as cofactor.

It carries out the reaction (2R)-homocitrate = (2R,3S)-homoisocitrate. It catalyses the reaction (2R)-homocitrate = cis-homoaconitate + H2O. The enzyme catalyses (2R,3S)-homoisocitrate = cis-homoaconitate + H2O. The catalysed reaction is cis-(homo)2aconitate + H2O = (2R,3S)-iso(homo)2citrate. It carries out the reaction cis-(homo)3aconitate + H2O = (2R,3S)-iso(homo)3citrate. It catalyses the reaction (R)-malate = maleate + H2O. The enzyme catalyses cis-aconitate + H2O = D-threo-isocitrate. It participates in organic acid metabolism; 2-oxosuberate biosynthesis. Functionally, component of a hydro-lyase with broad substrate specificity for cis-unsaturated tricarboxylic acids. Catalyzes both the reversible dehydration of (R)-homocitrate ((R)-2-hydroxybutane-1,2,4-tricarboxylate) to produce cis-homoaconitate ((Z)-but-1-ene-1,2,4-tricarboxylate), and its hydration to homoisocitrate ((1R,2S)-1-hydroxybutane-1,2,4-tricarboxylate). Is also able to hydrate the analogous longer chain substrates cis-homo(2)-aconitate, cis-homo(3)-aconitate, and even the non-physiological cis-homo(4)-aconitate with similar efficiency. These reactions are part of the biosynthesis pathway of coenzyme B. Can also catalyze the hydration of maleate to (R)-malate, and that of cis-aconitate. Cannot catalyze the hydration of citraconate and the dehydration of (S)-homocitrate, citramalate, 2-isopropylmalate, 3-isopropylmalate, citrate or threo-DL-isocitrate. This chain is Methanogen homoaconitase large subunit (hacA), found in Methanocaldococcus jannaschii (strain ATCC 43067 / DSM 2661 / JAL-1 / JCM 10045 / NBRC 100440) (Methanococcus jannaschii).